A 389-amino-acid chain; its full sequence is Type 2 DNA topoisomerase 6 subunit A (389 aa).

The region spanning 13 to 161 (KARLRAAEVM…MLILSKEKGK (149 aa)) is the Topo IIA-type catalytic domain. Tyr107 acts as the O-(5'-phospho-DNA)-tyrosine intermediate in catalysis. 2 residues coordinate Mg(2+): Glu208 and Asp260.

The protein belongs to the TOP6A family. Homodimer. Heterotetramer of two Top6A and two Top6B chains. The cofactor is Mg(2+).

The enzyme catalyses ATP-dependent breakage, passage and rejoining of double-stranded DNA.. Its function is as follows. Relaxes both positive and negative superturns and exhibits a strong decatenase activity. The protein is Type 2 DNA topoisomerase 6 subunit A of Aeropyrum pernix (strain ATCC 700893 / DSM 11879 / JCM 9820 / NBRC 100138 / K1).